The chain runs to 414 residues: Serine hydroxymethyltransferase (414 aa).

(6S)-5,6,7,8-tetrahydrofolate is bound by residues leucine 121 and 125-127 (GHL). Lysine 229 is subject to N6-(pyridoxal phosphate)lysine.

This sequence belongs to the SHMT family. Homodimer. Pyridoxal 5'-phosphate serves as cofactor.

Its subcellular location is the cytoplasm. The catalysed reaction is (6R)-5,10-methylene-5,6,7,8-tetrahydrofolate + glycine + H2O = (6S)-5,6,7,8-tetrahydrofolate + L-serine. Its pathway is one-carbon metabolism; tetrahydrofolate interconversion. The protein operates within amino-acid biosynthesis; glycine biosynthesis; glycine from L-serine: step 1/1. Functionally, catalyzes the reversible interconversion of serine and glycine with tetrahydrofolate (THF) serving as the one-carbon carrier. This reaction serves as the major source of one-carbon groups required for the biosynthesis of purines, thymidylate, methionine, and other important biomolecules. Also exhibits THF-independent aldolase activity toward beta-hydroxyamino acids, producing glycine and aldehydes, via a retro-aldol mechanism. The polypeptide is Serine hydroxymethyltransferase (Paracidovorax citrulli (strain AAC00-1) (Acidovorax citrulli)).